The primary structure comprises 536 residues: Multifunctional cytochrome P450 monooxygenase af510 (536 aa).

Residues 4-24 form a helical membrane-spanning segment; that stretch reads ELSTLQLSCVAFVAFMAVLVF. Asn-210 and Asn-293 each carry an N-linked (GlcNAc...) asparagine glycan. Cys-448 serves as a coordination point for heme.

Belongs to the cytochrome P450 family. Requires heme as cofactor.

The protein localises to the membrane. The catalysed reaction is (+)-exo-beta-bergamotene + 2 reduced [NADPH--hemoprotein reductase] + 3 O2 = 5-dehydro-6-demethoxyfumagillol + 2 oxidized [NADPH--hemoprotein reductase] + 3 H2O + 2 H(+). It participates in secondary metabolite biosynthesis; terpenoid biosynthesis. Functionally, multifunctional cytochrome P450 monooxygenase; part of the gene cluster that mediates the biosynthesis of fumagillin, a meroterpenoid that has numerous biological activities including irreversible inhibition of human type 2 methionine aminopeptidase (METAP2). Within the pathway, the multifunctional cytochrome P450 monooxygenase af510 acts as a 2,4,6-trichlorophenol monooxygenase that first performs the C-H hydroxylation at the bridgehead C5 position to yield 5R-hydroxyl-beta-trans-bergamotene. Subsequently, a four electron oxidation initiated at C-9 coupled to cleavage of the cyclobutane C5-C8 bond of the bicyclo[3.1.1] core yields the epoxyketone intermediate 5-keto-cordycol. An additional epoxidation reaction also catalyzed by af510 then furnishes the characteristic bisepoxide ketone 5-keto-demethoxyfumagillol. The pathway begins with the conversion of farnesyl pyrophosphate (FPP) to beta-trans-bergamotene by the membrane-bound beta-trans-bergamotene synthase af520. The multifunctional cytochrome P450 monooxygenase af510 then converts beta-trans-bergamotene into 5-keto-demethoxyfumagillol via several oxydation steps. 5-keto-demethoxyfumagillol is then subjected to successive C-6 hydroxylation and O-methylation by the dioxygenase af480 and O-methyltransferase af390-400, respectively, to yield 5-keto-fumagillol, which is then stereoselectively reduced by the keto-reductase af490 to 5R-hydroxy-seco-sesquiterpene. The next step is the polyketide transferase af380-catalyzed transfer of a dodecapentaenoyl group synthesized by the polyketide synthase af370 onto 5R-hydroxy-seco-sesquiterpene which leads to the production of prefumagillin. Finally, oxidative cleavage by the monooxygenase af470 converts prefumagillin to fumagillin. The protein is Multifunctional cytochrome P450 monooxygenase af510 of Aspergillus fumigatus (strain ATCC MYA-4609 / CBS 101355 / FGSC A1100 / Af293) (Neosartorya fumigata).